The following is a 446-amino-acid chain: ATP synthase subunit b-delta (446 aa).

An ATP synthase subunit b region spans residues 1-168; sequence MSTFIGQLVG…PAAADVQYPL (168 aa). Residues 4 to 24 form a helical membrane-spanning segment; it reads FIGQLVGFAAIVFLVVRYVVP. The interval 169 to 446 is ATP synthase subunit delta; the sequence is MTKMRSSSRV…LAAAEAQLPD (278 aa).

It in the N-terminal section; belongs to the ATPase B chain family. This sequence in the C-terminal section; belongs to the ATPase delta chain family. In terms of assembly, F-type ATPases have 2 components, F(1) - the catalytic core - and F(0) - the membrane proton channel. F(1) has five subunits: alpha(3), beta(3), gamma(1), delta(1), epsilon(1). F(0) has three main subunits: a(1), b(2) and c(10-14). The alpha and beta chains form an alternating ring which encloses part of the gamma chain. F(1) is attached to F(0) by a central stalk formed by the gamma and epsilon chains, while a peripheral stalk is formed by the delta and b chains.

The protein localises to the cell membrane. F(1)F(0) ATP synthase produces ATP from ADP in the presence of a proton or sodium gradient. F-type ATPases consist of two structural domains, F(1) containing the extramembraneous catalytic core and F(0) containing the membrane proton channel, linked together by a central stalk and a peripheral stalk. During catalysis, ATP synthesis in the catalytic domain of F(1) is coupled via a rotary mechanism of the central stalk subunits to proton translocation. In terms of biological role, this fusion protein includes a component of the F(0) channel (subunit b) and of the F(1) subunit (subunit delta). Two copies of subunit b and one of delta together form the peripheral 'stator' stalk which links F(1) to F(0). In Mycobacterium avium (strain 104), this protein is ATP synthase subunit b-delta (atpFH).